We begin with the raw amino-acid sequence, 349 residues long: Selenide, water dikinase (349 aa).

The active site involves Sec-19. Residue Sec-19 is a non-standard amino acid, selenocysteine. Residues Lys-22 and 50–52 contribute to the ATP site; that span reads LGD. Asp-53 lines the Mg(2+) pocket. Residues Asp-69, Asp-92, and 140-142 contribute to the ATP site; that span reads GHT. Asp-92 serves as a coordination point for Mg(2+). Asp-246 is a Mg(2+) binding site.

The protein belongs to the selenophosphate synthase 1 family. Class I subfamily. As to quaternary structure, homodimer. Mg(2+) is required as a cofactor.

The enzyme catalyses hydrogenselenide + ATP + H2O = selenophosphate + AMP + phosphate + 2 H(+). Functionally, synthesizes selenophosphate from selenide and ATP. This Methanocaldococcus jannaschii (strain ATCC 43067 / DSM 2661 / JAL-1 / JCM 10045 / NBRC 100440) (Methanococcus jannaschii) protein is Selenide, water dikinase.